The primary structure comprises 778 residues: Dynein axonemal intermediate chain 4 (778 aa).

6 WD repeats span residues 477-517 (HCES…QTPI), 526-573 (LHTS…ECVD), 586-629 (RHIS…QYLE), 633-673 (AHKR…PVMG), 676-715 (SGQR…LDPT), and 721-760 (SPGV…AGGG).

As to quaternary structure, part of the multisubunit axonemal dynein complex formed at least of two heavy chains and a number of intermediate and light chains.

Its subcellular location is the cytoplasm. The protein localises to the cytoskeleton. The protein resides in the flagellum axoneme. It localises to the cilium axoneme. It is found in the dynein axonemal particle. Its function is as follows. Plays a critical role in the assembly of axonemal dynein complex. Plays a key role in ciliary motility. This Danio rerio (Zebrafish) protein is Dynein axonemal intermediate chain 4.